The following is a 507-amino-acid chain: Phosphoprotein (507 aa).

Residues 1-48 (MAEEQARHVKNGLECIRALKAEPIGSLAVEEAMAAWSEISDNPGQDRA) form an interaction with N0 region. 4 disordered regions span residues 40–92 (SDNP…DAET), 133–168 (SGLDGDSTLSGGDDESENSDVDIGEPDTEGYAITDR), 201–228 (NNFPKLGKTLNVPPPPNPSRASTSETPI), and 252–273 (TQCARKSPSEPSGPGAPAGNVP). The residue at position 86 (S86) is a Phosphoserine. Low complexity predominate over residues 133–143 (SGLDGDSTLSG). Residues 144-160 (GDDESENSDVDIGEPDT) are compositionally biased toward acidic residues. Position 151 is a phosphoserine (S151). The segment covering 260-270 (SEPSGPGAPAG) has biased composition (low complexity). The tract at residues 304–376 (GDYYDDELFS…LSSIMIAIPG (73 aa)) is multimerization. Interaction with the L polymerase regions lie at residues 361-377 (STLEGHLSSIMIAIPGL) and 396-410 (PIIGRDSGRALAEVL). Residues 457 to 507 (GPASRSVIRSIIKSSRLEEDRKRYLMTLLDDIKGANDLAKFHQMLMKIIMK) form a x domain (XD) region. The segment at 459–507 (ASRSVIRSIIKSSRLEEDRKRYLMTLLDDIKGANDLAKFHQMLMKIIMK) is interaction with the nucleocapsid (N-RNA).

It belongs to the morbillivirus P protein family. Homotetramer. Interacts (via multimerization domain and XD domain) with polymerase L; this interaction forms the polymerase L-P complex. Interacts (via N-terminus) with N0 (via Ncore); this interaction allows P to chaperon N0 to avoid N polymerization and non-specific RNA binding before encapsidation. Interacts (via C-terminus) with N-RNA template (via Ntail); this interaction maintains the P/L complex anchored to the nucleocapsid template during the sequential transcription. Interacts (via C-terminus) with protein C this interaction allows C to associate with the ribonucleocapsid. Phosphorylation on serines by host CK2 is necessary for the formation of viral factories.

In terms of biological role, essential cofactor of the RNA polymerase L that plays a central role in the transcription and replication by forming the polymerase complex with RNA polymerase L and recruiting L to the genomic N-RNA template for RNA synthesis. Also plays a central role in the encapsidation of nascent RNA chains by forming the encapsidation complex with the nucleocapsid protein N (N-P complex). Acts as a chaperone for newly synthesized free N protein, so-called N0, allowing encapsidation of nascent RNA chains during replication. The nucleoprotein protein N prevents excessive phosphorylation of P, which leads to down-regulation of viral transcription/ replication. Participates, together with N, in the formation of viral factories (viroplasms), which are large inclusions in the host cytoplasm where replication takes place. The sequence is that of Phosphoprotein (P/V) from Homo sapiens (Human).